Consider the following 124-residue polypeptide: Large ribosomal subunit protein bL19 (124 aa).

Belongs to the bacterial ribosomal protein bL19 family.

Functionally, this protein is located at the 30S-50S ribosomal subunit interface and may play a role in the structure and function of the aminoacyl-tRNA binding site. The sequence is that of Large ribosomal subunit protein bL19 from Zymomonas mobilis subsp. mobilis (strain ATCC 31821 / ZM4 / CP4).